A 676-amino-acid polypeptide reads, in one-letter code: DNA ligase (676 aa).

NAD(+) contacts are provided by residues 34–38, 84–85, and glutamate 116; these read DAEYD and SL. The N6-AMP-lysine intermediate role is filled by lysine 118. Arginine 139, glutamate 174, lysine 294, and lysine 318 together coordinate NAD(+). 4 residues coordinate Zn(2+): cysteine 412, cysteine 415, cysteine 428, and cysteine 433. The BRCT domain occupies 589-676; the sequence is KGGEALKGLT…RTGKKAEELV (88 aa).

Belongs to the NAD-dependent DNA ligase family. LigA subfamily. Requires Mg(2+) as cofactor. The cofactor is Mn(2+).

It carries out the reaction NAD(+) + (deoxyribonucleotide)n-3'-hydroxyl + 5'-phospho-(deoxyribonucleotide)m = (deoxyribonucleotide)n+m + AMP + beta-nicotinamide D-nucleotide.. In terms of biological role, DNA ligase that catalyzes the formation of phosphodiester linkages between 5'-phosphoryl and 3'-hydroxyl groups in double-stranded DNA using NAD as a coenzyme and as the energy source for the reaction. It is essential for DNA replication and repair of damaged DNA. The polypeptide is DNA ligase (Thermus thermophilus (strain ATCC BAA-163 / DSM 7039 / HB27)).